The primary structure comprises 240 residues: Urease accessory protein UreD (240 aa).

Belongs to the UreD family. As to quaternary structure, ureD, UreF and UreG form a complex that acts as a GTP-hydrolysis-dependent molecular chaperone, activating the urease apoprotein by helping to assemble the nickel containing metallocenter of UreC. The UreE protein probably delivers the nickel.

The protein localises to the cytoplasm. Required for maturation of urease via the functional incorporation of the urease nickel metallocenter. The chain is Urease accessory protein UreD from Granulibacter bethesdensis (strain ATCC BAA-1260 / CGDNIH1).